A 235-amino-acid polypeptide reads, in one-letter code: 2-C-methyl-D-erythritol 4-phosphate cytidylyltransferase (235 aa).

It belongs to the IspD/TarI cytidylyltransferase family. IspD subfamily.

The enzyme catalyses 2-C-methyl-D-erythritol 4-phosphate + CTP + H(+) = 4-CDP-2-C-methyl-D-erythritol + diphosphate. It participates in isoprenoid biosynthesis; isopentenyl diphosphate biosynthesis via DXP pathway; isopentenyl diphosphate from 1-deoxy-D-xylulose 5-phosphate: step 2/6. Catalyzes the formation of 4-diphosphocytidyl-2-C-methyl-D-erythritol from CTP and 2-C-methyl-D-erythritol 4-phosphate (MEP). The sequence is that of 2-C-methyl-D-erythritol 4-phosphate cytidylyltransferase from Pseudomonas putida (strain ATCC 700007 / DSM 6899 / JCM 31910 / BCRC 17059 / LMG 24140 / F1).